A 267-amino-acid chain; its full sequence is tRNA pseudouridine synthase A (267 aa).

Aspartate 54 acts as the Nucleophile in catalysis. Residue tyrosine 114 participates in substrate binding.

Belongs to the tRNA pseudouridine synthase TruA family. As to quaternary structure, homodimer.

It catalyses the reaction uridine(38/39/40) in tRNA = pseudouridine(38/39/40) in tRNA. Formation of pseudouridine at positions 38, 39 and 40 in the anticodon stem and loop of transfer RNAs. The protein is tRNA pseudouridine synthase A of Tropheryma whipplei (strain Twist) (Whipple's bacillus).